The primary structure comprises 607 residues: UvrABC system protein C (607 aa).

Positions 16 to 94 (GRPGVYRMFD…IKEWRPPYNI (79 aa)) constitute a GIY-YIG domain. Positions 203-238 (QQLGNELNAEMEKAAMALNFEKAAELRDQIALLRRV) constitute a UVR domain.

The protein belongs to the UvrC family. Interacts with UvrB in an incision complex.

The protein localises to the cytoplasm. Its function is as follows. The UvrABC repair system catalyzes the recognition and processing of DNA lesions. UvrC both incises the 5' and 3' sides of the lesion. The N-terminal half is responsible for the 3' incision and the C-terminal half is responsible for the 5' incision. This is UvrABC system protein C from Pseudomonas entomophila (strain L48).